Consider the following 472-residue polypeptide: Diaminopimelate decarboxylase (472 aa).

The tract at residues Met-1–Val-23 is disordered. Lys-97 is subject to N6-(pyridoxal phosphate)lysine. Pyridoxal 5'-phosphate-binding positions include Gly-283 and Glu-325 to Arg-328. Substrate-binding residues include Arg-328, Arg-369, and Tyr-373. Catalysis depends on Cys-400, which acts as the Proton donor. Substrate contacts are provided by Glu-401 and Tyr-430. Pyridoxal 5'-phosphate is bound at residue Tyr-430.

The protein belongs to the Orn/Lys/Arg decarboxylase class-II family. LysA subfamily. As to quaternary structure, homodimer. The cofactor is pyridoxal 5'-phosphate.

The catalysed reaction is meso-2,6-diaminopimelate + H(+) = L-lysine + CO2. The protein operates within amino-acid biosynthesis; L-lysine biosynthesis via DAP pathway; L-lysine from DL-2,6-diaminopimelate: step 1/1. Functionally, specifically catalyzes the decarboxylation of meso-diaminopimelate (meso-DAP) to L-lysine. This is Diaminopimelate decarboxylase from Mycobacterium leprae (strain TN).